The sequence spans 1111 residues: RecBCD enzyme subunit RecC (1111 aa).

The protein belongs to the RecC family. As to quaternary structure, heterotrimer of RecB, RecC and RecD. All subunits contribute to DNA-binding.

Its function is as follows. A helicase/nuclease that prepares dsDNA breaks (DSB) for recombinational DNA repair. Binds to DSBs and unwinds DNA via a highly rapid and processive ATP-dependent bidirectional helicase activity. Unwinds dsDNA until it encounters a Chi (crossover hotspot instigator) sequence from the 3' direction. Cuts ssDNA a few nucleotides 3' to the Chi site. The properties and activities of the enzyme are changed at Chi. The Chi-altered holoenzyme produces a long 3'-ssDNA overhang and facilitates RecA-binding to the ssDNA for homologous DNA recombination and repair. Holoenzyme degrades any linearized DNA that is unable to undergo homologous recombination. In the holoenzyme this subunit recognizes the wild-type Chi sequence, and when added to isolated RecB increases its ATP-dependent helicase processivity. This Buchnera aphidicola subsp. Baizongia pistaciae (strain Bp) protein is RecBCD enzyme subunit RecC.